The sequence spans 349 residues: Probable formaldehyde dehydrogenase AdhA (349 aa).

Residues Cys-44, His-66, Cys-97, Cys-100, Cys-103, Cys-111, and Cys-161 each coordinate Zn(2+).

This sequence belongs to the zinc-containing alcohol dehydrogenase family. It depends on Zn(2+) as a cofactor.

Functionally, functions in the protection against aldehyde-stress. In Bacillus subtilis (strain 168), this protein is Probable formaldehyde dehydrogenase AdhA (adhA).